We begin with the raw amino-acid sequence, 894 residues long: MNPGFDLSRRNPQEDFELIQRIGSGTYGDVYKARNVNTGELAAIKVIKLEPGEDFAVVQQEIIMMKDCKHPNIVAYFGSYLRRDKLWICMEFCGGGSLQDIYHVTGPLSELQIAYVSRETLQGLYYLHSKGKMHRDIKGANILLTDNGHVKLADFGVSAQITATIAKRKSFIGTPYWMAPEVAAVERKGGYNQLCDLWAVGITAIELAELQPPMFDLHPMRALFLMTKSNFQPPKLKDKLKWSNSFHHFVKMALTKNPKKRPNAEKLLQHPFVTQPLTRSLAIELLDKVNNPDHSTYHDFDDDDPEPLVAVPHRIPSTSRNVREEKTRSEINFGQVKFDPPLRKETEPHHELPDSDGFFDSSEEIYYTARSNLDLQLEYGQGHQSHCFLGGNKSLLKSVEEELHQRGHVAHLEDDEGDDDDSKHSTMKAKVPPPLPPKPKSIFIPQDTHSAEDGNQGTIKRCPSSGSPAKPSHVPPRPPPPRLPPQKPAVLGNGVNSFQLNGERDGSLYQQQSEQRGTNLSRKEKKDVPKPISNGLPPTPKVHMGACFSKVFNGCPLKIHCATSWINPDTRDQYLIFGAEEGIYTLNLNELHETSMEQLFPRRCTWLYVMNNCLLSVSGKASQLYSHNLPGLFDYARQMQKLPVAIPAHKLPDRILPRKFAVSAKIPETKWCQKCCVVRNPYTGHKYLCGALQTSIVLLEWVEPMQKFMLIKHIEFPMPCPLRMFEMLVVPEQEYPLVCVGVSRGRDFNQVVRFETVNPNSTSSWFTESDAPQTSVTHVTQLERDTILVCLDCCIKIVNLQGRLKSSRKLSSELTFDFQIESIVCLQDSVLAFWKHGMQGRSFRSNEVTQEISDNTRIFRLLGSDRVVVLESRPTDNPTANSNLYILAGHENSY.

Met-1 bears the N-acetylmethionine mark. Residues 16-273 (FELIQRIGSG…AEKLLQHPFV (258 aa)) form the Protein kinase domain. ATP is bound by residues 22–30 (IGSGTYGDV) and Lys-45. Catalysis depends on Asp-136, which acts as the Proton acceptor. Residue Ser-329 is modified to Phosphoserine. Positions 339–358 (DPPLRKETEPHHELPDSDGF) are disordered. The segment covering 340-353 (PPLRKETEPHHELP) has biased composition (basic and acidic residues). Residue Ser-398 is modified to Phosphoserine. The tract at residues 408–537 (HVAHLEDDEG…VPKPISNGLP (130 aa)) is disordered. Residues 473–487 (HVPPRPPPPRLPPQK) are compositionally biased toward pro residues. Residues 508 to 520 (LYQQQSEQRGTNL) are compositionally biased toward polar residues. Residues 556-867 (PLKIHCATSW…IFRLLGSDRV (312 aa)) form the CNH domain.

This sequence belongs to the protein kinase superfamily. STE Ser/Thr protein kinase family. STE20 subfamily. As to quaternary structure, interacts with SH3GL2. Interaction appears to regulate MAP4K3-mediated JNK activation. Mg(2+) is required as a cofactor.

It catalyses the reaction L-seryl-[protein] + ATP = O-phospho-L-seryl-[protein] + ADP + H(+). It carries out the reaction L-threonyl-[protein] + ATP = O-phospho-L-threonyl-[protein] + ADP + H(+). Serine/threonine kinase that plays a role in the response to environmental stress. Appears to act upstream of the JUN N-terminal pathway. Activator of the Hippo signaling pathway which plays a pivotal role in organ size control and tumor suppression by restricting proliferation and promoting apoptosis. MAP4Ks act in parallel to and are partially redundant with STK3/MST2 and STK4/MST2 in the phosphorylation and activation of LATS1/2, and establish MAP4Ks as components of the expanded Hippo pathway. The sequence is that of Mitogen-activated protein kinase kinase kinase kinase 3 (Map4k3) from Mus musculus (Mouse).